A 73-amino-acid chain; its full sequence is U-scoloptoxin(15)-Sm3a (73 aa).

The signal sequence occupies residues 1 to 23 (MERKVFLLLFVIVLLTLPGFMSA).

Belongs to the scoloptoxin-15 family. Contains 2 disulfide bonds. In terms of tissue distribution, expressed by the venom gland.

It localises to the secreted. The chain is U-scoloptoxin(15)-Sm3a from Scolopendra morsitans (Tanzanian blue ringleg centipede).